Reading from the N-terminus, the 248-residue chain is Cell division protein FtsQ (248 aa).

The Cytoplasmic portion of the chain corresponds to 1 to 4 (MGTR). The helical transmembrane segment at 5–25 (LRALLGVLILLVLGGAGWLFL) threads the bilayer. Over 26–248 (RWEPTLLPIR…RVAARAGNRR (223 aa)) the chain is Periplasmic. The region spanning 32-101 (LPIRLIQIEG…DTLRVQVREY (70 aa)) is the POTRA domain.

It belongs to the FtsQ/DivIB family. FtsQ subfamily. Part of a complex composed of FtsB, FtsL and FtsQ.

It localises to the cell inner membrane. In terms of biological role, essential cell division protein. May link together the upstream cell division proteins, which are predominantly cytoplasmic, with the downstream cell division proteins, which are predominantly periplasmic. May control correct divisome assembly. The chain is Cell division protein FtsQ from Allochromatium vinosum (strain ATCC 17899 / DSM 180 / NBRC 103801 / NCIMB 10441 / D) (Chromatium vinosum).